Here is a 212-residue protein sequence, read N- to C-terminus: Adenylate kinase (212 aa).

Residue glycine 14–threonine 19 participates in ATP binding. Positions serine 34–valine 63 are NMP. Residues threonine 35, arginine 40, serine 61 to valine 63, glycine 89 to arginine 92, and glutamine 96 contribute to the AMP site. An LID region spans residues glutamine 126–aspartate 163. Position 127 (arginine 127) interacts with ATP. Zn(2+) contacts are provided by cysteine 130 and cysteine 133. Serine 136–tyrosine 137 is a binding site for ATP. Zn(2+) contacts are provided by cysteine 150 and aspartate 153. AMP is bound by residues arginine 160 and arginine 171. An ATP-binding site is contributed by glutamine 199.

It belongs to the adenylate kinase family. In terms of assembly, monomer.

The protein localises to the cytoplasm. It carries out the reaction AMP + ATP = 2 ADP. Its pathway is purine metabolism; AMP biosynthesis via salvage pathway; AMP from ADP: step 1/1. In terms of biological role, catalyzes the reversible transfer of the terminal phosphate group between ATP and AMP. Plays an important role in cellular energy homeostasis and in adenine nucleotide metabolism. This is Adenylate kinase from Mesomycoplasma hyopneumoniae (strain J / ATCC 25934 / NCTC 10110) (Mycoplasma hyopneumoniae).